The chain runs to 428 residues: tRNA modification GTPase MnmE (428 aa).

The (6S)-5-formyl-5,6,7,8-tetrahydrofolate site is built by Arg-20, Glu-77, and Lys-117. The region spanning 213-351 (GFEIALVGAP…LLEKIRSVFS (139 aa)) is the TrmE-type G domain. Asn-223 lines the K(+) pocket. GTP is bound by residues 223 to 228 (NAGKST), 242 to 248 (SEIAGTT), and 267 to 270 (DTAG). Ser-227 is a binding site for Mg(2+). K(+) contacts are provided by Ser-242, Ile-244, and Thr-247. Mg(2+) is bound at residue Thr-248. Lys-428 contacts (6S)-5-formyl-5,6,7,8-tetrahydrofolate.

This sequence belongs to the TRAFAC class TrmE-Era-EngA-EngB-Septin-like GTPase superfamily. TrmE GTPase family. Homodimer. Heterotetramer of two MnmE and two MnmG subunits. It depends on K(+) as a cofactor.

The protein localises to the cytoplasm. In terms of biological role, exhibits a very high intrinsic GTPase hydrolysis rate. Involved in the addition of a carboxymethylaminomethyl (cmnm) group at the wobble position (U34) of certain tRNAs, forming tRNA-cmnm(5)s(2)U34. The protein is tRNA modification GTPase MnmE of Roseobacter denitrificans (strain ATCC 33942 / OCh 114) (Erythrobacter sp. (strain OCh 114)).